The sequence spans 301 residues: Tetrapeptide repeat homeobox protein 2 (301 aa).

Disordered stretches follow at residues 1-27 (MQDP…RTVY) and 273-301 (SLST…LLDL). Basic and acidic residues-rich tracts occupy residues 16–26 (PPRRQRQERTV) and 281–292 (YKEEDGFVDKNH). Residues 20-79 (QRQERTVYTESQQKVLEFYFQKDQYPNYDQRLNLAEMLSLREQQLQVWFKNRRAKLARER) constitute a DNA-binding region (homeobox).

This sequence belongs to the paired homeobox family.

The protein resides in the nucleus. Functionally, transcription factor expressed after fertilization required for zygotic genome activation (ZGA), a critical event in early embryonic development during which the developmental control passes from maternally provided mRNAs to the expression of the zygotic genome after fertilization. Binds and activates expression of key ZGA marker genes, such as NANOGNB, ZSCAN4, DUXB, KLF5 and DPPA3. Binds to regulatory DNA sequences containing a 5'-TAATCC-3' sequence motif. This is Tetrapeptide repeat homeobox protein 2 from Homo sapiens (Human).